The sequence spans 301 residues: UDP-N-acetylenolpyruvoylglucosamine reductase (301 aa).

An FAD-binding PCMH-type domain is found at 29 to 195; the sequence is KIGGPADVFV…VEAIFSLTRG (167 aa). Arg-174 is an active-site residue. Ser-224 (proton donor) is an active-site residue. Glu-294 is a catalytic residue.

It belongs to the MurB family. It depends on FAD as a cofactor.

The protein resides in the cytoplasm. It carries out the reaction UDP-N-acetyl-alpha-D-muramate + NADP(+) = UDP-N-acetyl-3-O-(1-carboxyvinyl)-alpha-D-glucosamine + NADPH + H(+). Its pathway is cell wall biogenesis; peptidoglycan biosynthesis. Cell wall formation. The sequence is that of UDP-N-acetylenolpyruvoylglucosamine reductase from Halalkalibacterium halodurans (strain ATCC BAA-125 / DSM 18197 / FERM 7344 / JCM 9153 / C-125) (Bacillus halodurans).